Here is a 132-residue protein sequence, read N- to C-terminus: uncharacterized protein (132 aa).

4 helical membrane passes run W6–S26, N34–F54, T59–Y79, and I106–I126.

The protein localises to the cell membrane. This is an uncharacterized protein from Bacillus subtilis (strain 168).